Reading from the N-terminus, the 757-residue chain is Chloride anion exchanger (757 aa).

The Cytoplasmic portion of the chain corresponds to 1-71 (MIEAIGNQYV…SWLPAYKIKE (71 aa)). Residues 72–92 (WLLSDIVSGISTGLVAVLQGL) form a helical membrane-spanning segment. A93 is a topological domain (extracellular). A helical transmembrane segment spans residues 94–114 (FALLVNIPPAYGLYAAFFPVI). At 115–124 (TYFFLGTSRH) the chain is on the cytoplasmic side. A helical membrane pass occupies residues 125-145 (ISVGPFPVLSMMVGVVVTRVV). Residues 146–176 (SDPNASSELSSSSTENDSFIEEKVMVAASVT) are Extracellular-facing. Residues N149 and N161 are each glycosylated (N-linked (GlcNAc...) asparagine). The chain crosses the membrane as a helical span at residues 177–197 (VLSGIIQLLLGVLQVGFVVIY). Topologically, residues 198–201 (LSES) are cytoplasmic. A helical transmembrane segment spans residues 202–222 (LISGFTTAAAIHVLVSQLKFM). Residues 223–250 (LQLPVPAYSDPFSIFKVLESVFTQIQKT) lie on the Extracellular side of the membrane. The helical transmembrane segment at 251 to 271 (NIADLVTSVIILVVVFVFKEI) threads the bilayer. Over 272 to 278 (NQRYRSK) the chain is Cytoplasmic. A helical membrane pass occupies residues 279–299 (LPVPIPIELIMTVIATGVSYG). Residues 300 to 335 (CNFEDRFGVAVVGNMSLGFQPPITPSVEVFQDTIGD) are Extracellular-facing. A helical transmembrane segment spans residues 336-356 (SFGIAIVGFAVAFSVASVYSL). Residues 357–367 (KYDYPIDGNQE) lie on the Cytoplasmic side of the membrane. A helical membrane pass occupies residues 368–388 (LIALGVSNIFTGAFKGFAGST). At 389–404 (ALSRSGVQESTGGKTQ) the chain is on the extracellular side. A helical membrane pass occupies residues 405 to 425 (VAGLLSAVIVLIVIVAIGFLL). Over 426–462 (QPLQKSVLAALALGNLKGMLMQFAEIGRLWKKDKYDC) the chain is Cytoplasmic. Residues 463 to 483 (LIWIMTFIFAIVLGLGLGLAA) form a helical membrane-spanning segment. The Extracellular segment spans residues 484–757 (SVAFQLLTIV…ECQVPVETKF (274 aa)). An STAS domain is found at 518 to 713 (NYAEVYEPEG…LTIHDAILHI (196 aa)). Positions 754–757 (ETKF) match the PDZ-binding motif.

Belongs to the SLC26A/SulP transporter (TC 2.A.53) family. In terms of assembly, interacts with PDZK1. Interacts with CFTR, SLC26A6 and NHERF1. Interacts (via PDZ-binding motif) with NHERF4 (via the third PDZ domain). This interaction leads to decreased expression of SLC26A3 on the cell membrane resulting in its reduced exchanger activity. In terms of processing, N-glycosylation is required for efficient cell surface expression, and protection from proteolytic degradation. Expressed in spermatogenic cells. Expressed at high levels in cecum and colon and at lower levels in small intestine.

Its subcellular location is the apical cell membrane. The protein resides in the membrane. The protein localises to the cell membrane. The catalysed reaction is hydrogencarbonate(in) + 2 chloride(out) = hydrogencarbonate(out) + 2 chloride(in). Its function is as follows. Mediates chloride-bicarbonate exchange with a chloride bicarbonate stoichiometry of 2:1 in the intestinal epithelia. Plays a role in the chloride and bicarbonate homeostasis during sperm epididymal maturation and capacitation. The protein is Chloride anion exchanger (Slc26a3) of Mus musculus (Mouse).